The primary structure comprises 304 residues: Glycine--tRNA ligase alpha subunit (304 aa).

Belongs to the class-II aminoacyl-tRNA synthetase family. As to quaternary structure, tetramer of two alpha and two beta subunits.

Its subcellular location is the cytoplasm. It catalyses the reaction tRNA(Gly) + glycine + ATP = glycyl-tRNA(Gly) + AMP + diphosphate. This Streptococcus agalactiae serotype III (strain NEM316) protein is Glycine--tRNA ligase alpha subunit.